The primary structure comprises 342 residues: Cytochrome c oxidase subunit 2 (342 aa).

Positions 1–22 (MKLWKTASRFLPLSFLTLFLTG) are cleaved as a signal peptide. Cys-23 carries N-palmitoyl cysteine lipidation. Cys-23 is lipidated: S-diacylglycerol cysteine. Over 23–50 (CLGEENLTALDPKGPQAQWIYDNMILSI) the chain is Extracellular. The cytochrome c oxidase subunit II stretch occupies residues 23–249 (CLGEENLTAL…MSAEVEEPTE (227 aa)). Residues 51-69 (IVMALVSIVVFAIFFIILA) form a helical membrane-spanning segment. At 70–89 (KYRRKPGDDEIPKQVHGNTA) the chain is on the cytoplasmic side. The chain crosses the membrane as a helical span at residues 90-108 (LEITWTVIPIILLVILAVP). The Extracellular portion of the chain corresponds to 109–342 (TITGTFMFAD…AYLRSLKVME (234 aa)). 4 residues coordinate Cu cation: His-175, Cys-210, Cys-214, and His-218. The region spanning 250–342 (TLANQGRQVF…AYLRSLKVME (93 aa)) is the Cytochrome c domain. Cys-264, Cys-267, His-268, and Met-317 together coordinate heme c.

The protein belongs to the cytochrome c oxidase subunit 2 family. It depends on Cu cation as a cofactor. Requires heme c as cofactor.

Its subcellular location is the cell membrane. It catalyses the reaction 4 Fe(II)-[cytochrome c] + O2 + 8 H(+)(in) = 4 Fe(III)-[cytochrome c] + 2 H2O + 4 H(+)(out). Its function is as follows. Subunits I and II form the functional core of the enzyme complex. Electrons originating in cytochrome c are transferred via heme a and Cu(A) to the binuclear center formed by heme a3 and Cu(B). The sequence is that of Cytochrome c oxidase subunit 2 (ctaC) from Alkalihalophilus pseudofirmus (strain ATCC BAA-2126 / JCM 17055 / OF4) (Bacillus pseudofirmus).